The primary structure comprises 393 residues: Putative N(4)-(beta-N-acetylglucosaminyl)-L-asparaginase GH22932 (393 aa).

Positions A15–S41 are disordered. Residues I19–S41 show a composition bias toward polar residues. 2 disulfide bridges follow: C100–C105 and C199–C215. The Nucleophile role is filled by T246. Residues R274 to D277 and T297 to G300 contribute to the substrate site. Residues C357 and C381 are joined by a disulfide bond.

The protein belongs to the Ntn-hydrolase family. In terms of assembly, heterotetramer of two alpha and two beta chains arranged as a dimer of alpha/beta heterodimers. Cleaved into an alpha and beta chain by autocatalysis; this activates the enzyme. The N-terminal residue of the beta subunit is responsible for the nucleophile hydrolase activity.

The catalysed reaction is N(4)-(beta-N-acetyl-D-glucosaminyl)-L-asparagine + H2O = N-acetyl-beta-D-glucosaminylamine + L-aspartate + H(+). Functionally, cleaves the GlcNAc-Asn bond which joins oligosaccharides to the peptide of asparagine-linked glycoproteins. In Drosophila grimshawi (Hawaiian fruit fly), this protein is Putative N(4)-(beta-N-acetylglucosaminyl)-L-asparaginase GH22932.